The chain runs to 459 residues: Sperm microtubule associated protein 2-like (459 aa).

Residues 1 to 138 (MEEGDFSGSS…QEDGKDDLFP (138 aa)) are disordered. The segment covering 21 to 30 (TTTTTETRTT) has biased composition (low complexity). The segment covering 47–63 (NGDEAEAVGEEGQEEDY) has biased composition (acidic residues). Residues 64–73 (EGSKTHKSHE) show a composition bias toward basic and acidic residues. Polar residues predominate over residues 77–87 (SFRSHNSSDPP). Composition is skewed to basic and acidic residues over residues 91-112 (KASD…KTSD) and 127-136 (ERQEDGKDDL). 8 THEG repeats span residues 172-190 (KKCF…PKKQ), 212-231 (AALK…PRLV), 258-277 (PALV…PNKF), 291-310 (TTRY…AKGT), 327-346 (STLS…PRIK), 367-386 (AALL…SKRV), 403-422 (AATH…PHTR), and 440-459 (SALK…PIVR).

The protein is Sperm microtubule associated protein 2-like of Mus musculus (Mouse).